A 360-amino-acid polypeptide reads, in one-letter code: Phenylalanine--tRNA ligase alpha subunit (360 aa).

Glu-260 is a Mg(2+) binding site.

Belongs to the class-II aminoacyl-tRNA synthetase family. Phe-tRNA synthetase alpha subunit type 1 subfamily. As to quaternary structure, tetramer of two alpha and two beta subunits. Requires Mg(2+) as cofactor.

The protein resides in the cytoplasm. It carries out the reaction tRNA(Phe) + L-phenylalanine + ATP = L-phenylalanyl-tRNA(Phe) + AMP + diphosphate + H(+). The chain is Phenylalanine--tRNA ligase alpha subunit from Rhodopseudomonas palustris (strain BisB5).